A 175-amino-acid polypeptide reads, in one-letter code: Nucleoside diphosphate kinase 6 (175 aa).

K15, F63, R91, T97, R111, and N121 together coordinate ATP. Catalysis depends on H124, which acts as the Pros-phosphohistidine intermediate.

Belongs to the NDK family. It depends on Mg(2+) as a cofactor.

It catalyses the reaction a 2'-deoxyribonucleoside 5'-diphosphate + ATP = a 2'-deoxyribonucleoside 5'-triphosphate + ADP. It carries out the reaction a ribonucleoside 5'-diphosphate + ATP = a ribonucleoside 5'-triphosphate + ADP. Functionally, major role in the synthesis of nucleoside triphosphates other than ATP. The ATP gamma phosphate is transferred to the NDP beta phosphate via a ping-pong mechanism, using a phosphorylated active-site intermediate. This is Nucleoside diphosphate kinase 6 (nme6) from Danio rerio (Zebrafish).